The primary structure comprises 144 residues: Interleukin-9 (144 aa).

The N-terminal stretch at 1 to 18 is a signal peptide; the sequence is MLLAMVLTSALLLCSVAG. The residue at position 19 (Gln19) is a Pyrrolidone carboxylic acid. Asn50, Asn63, Asn78, and Asn114 each carry an N-linked (GlcNAc...) asparagine glycan.

The protein belongs to the IL-7/IL-9 family. As to quaternary structure, interacts with IL9R. Interacts with IL2RG.

It localises to the secreted. Multifunctional cytokine secreted mainly by T-helper 2 lymphocytes and also mast cells or NKT cells that plays important roles in the immune response against parasites. Affects intestinal epithelial permeability and adaptive immunity. In addition, induces the differentiation of specific T-cell subsets such as IL-17 producing helper T-cells (TH17) and also proliferation and differentiation of mast cells. Mechanistically, exerts its biological effects through a receptor composed of IL9R subunit and a signal transducing subunit IL2RG. Receptor stimulation results in the rapid activation of JAK1 and JAK3 kinase activities leading to STAT1, STAT3 and STAT5-mediated transcriptional programs. Induction of differentiation genes seems to be mediated by STAT1 alone, while protection of cells from apoptosis depends on STAT3 and STAT5. The polypeptide is Interleukin-9 (IL9) (Homo sapiens (Human)).